The sequence spans 249 residues: Small ribosomal subunit protein uS2 (249 aa).

It belongs to the universal ribosomal protein uS2 family.

This is Small ribosomal subunit protein uS2 from Chlorobaculum tepidum (strain ATCC 49652 / DSM 12025 / NBRC 103806 / TLS) (Chlorobium tepidum).